We begin with the raw amino-acid sequence, 144 residues long: 3-hydroxyacyl-[acyl-carrier-protein] dehydratase FabZ (144 aa).

H49 is a catalytic residue.

The protein belongs to the thioester dehydratase family. FabZ subfamily.

It localises to the cytoplasm. It carries out the reaction a (3R)-hydroxyacyl-[ACP] = a (2E)-enoyl-[ACP] + H2O. Functionally, involved in unsaturated fatty acids biosynthesis. Catalyzes the dehydration of short chain beta-hydroxyacyl-ACPs and long chain saturated and unsaturated beta-hydroxyacyl-ACPs. The protein is 3-hydroxyacyl-[acyl-carrier-protein] dehydratase FabZ of Clostridium kluyveri (strain NBRC 12016).